Here is a 494-residue protein sequence, read N- to C-terminus: Histidine--tRNA ligase (494 aa).

The tract at residues 1-20 (MAKDQKKQPRPKAETPKGFR) is disordered.

It belongs to the class-II aminoacyl-tRNA synthetase family. Homodimer.

Its subcellular location is the cytoplasm. It catalyses the reaction tRNA(His) + L-histidine + ATP = L-histidyl-tRNA(His) + AMP + diphosphate + H(+). This Paracoccus denitrificans (strain Pd 1222) protein is Histidine--tRNA ligase.